A 324-amino-acid chain; its full sequence is Acetyl-coenzyme A carboxylase carboxyl transferase subunit alpha (324 aa).

Positions 42–296 (RLSELEEEVY…EKALTRLAEK (255 aa)) constitute a CoA carboxyltransferase C-terminal domain.

This sequence belongs to the AccA family. As to quaternary structure, acetyl-CoA carboxylase is a heterohexamer composed of biotin carboxyl carrier protein (AccB), biotin carboxylase (AccC) and two subunits each of ACCase subunit alpha (AccA) and ACCase subunit beta (AccD).

Its subcellular location is the cytoplasm. It carries out the reaction N(6)-carboxybiotinyl-L-lysyl-[protein] + acetyl-CoA = N(6)-biotinyl-L-lysyl-[protein] + malonyl-CoA. It participates in lipid metabolism; malonyl-CoA biosynthesis; malonyl-CoA from acetyl-CoA: step 1/1. Functionally, component of the acetyl coenzyme A carboxylase (ACC) complex. First, biotin carboxylase catalyzes the carboxylation of biotin on its carrier protein (BCCP) and then the CO(2) group is transferred by the carboxyltransferase to acetyl-CoA to form malonyl-CoA. The polypeptide is Acetyl-coenzyme A carboxylase carboxyl transferase subunit alpha (Shouchella clausii (strain KSM-K16) (Alkalihalobacillus clausii)).